Here is a 615-residue protein sequence, read N- to C-terminus: 1-deoxy-D-xylulose-5-phosphate synthase (615 aa).

Thiamine diphosphate contacts are provided by residues His-72 and 111–113 (GHS). Residue Asp-142 coordinates Mg(2+). Thiamine diphosphate contacts are provided by residues 143–144 (GA), Asn-171, Tyr-278, and Glu-360. Asn-171 lines the Mg(2+) pocket.

The protein belongs to the transketolase family. DXPS subfamily. As to quaternary structure, homodimer. Mg(2+) serves as cofactor. The cofactor is thiamine diphosphate.

The enzyme catalyses D-glyceraldehyde 3-phosphate + pyruvate + H(+) = 1-deoxy-D-xylulose 5-phosphate + CO2. It functions in the pathway metabolic intermediate biosynthesis; 1-deoxy-D-xylulose 5-phosphate biosynthesis; 1-deoxy-D-xylulose 5-phosphate from D-glyceraldehyde 3-phosphate and pyruvate: step 1/1. Its function is as follows. Catalyzes the acyloin condensation reaction between C atoms 2 and 3 of pyruvate and glyceraldehyde 3-phosphate to yield 1-deoxy-D-xylulose-5-phosphate (DXP). In Campylobacter jejuni subsp. jejuni serotype O:23/36 (strain 81-176), this protein is 1-deoxy-D-xylulose-5-phosphate synthase.